The chain runs to 1396 residues: Helicase ARIP4 (1396 aa).

The interval 1–103 (MSDASISGSE…LQKPANLRRN (103 aa)) is disordered. Positions 11–49 (PELDPEDMEEEEEDDEDDDEEEEEEEDEEDNDGDDEDDK) are enriched in acidic residues. A compositionally biased stretch (polar residues) spans 75–84 (RSTTSGQSGQ). Residues 290–510 (RFSGSSGFGC…WCMVDFVRPD (221 aa)) enclose the Helicase ATP-binding domain. Residue 303-310 (HSMGLGKT) participates in ATP binding. Positions 461 to 464 (DEGH) match the DEAH box motif. Residues 549-553 (LHSLL) carry the LXXLL motif 1 motif. Positions 717–891 (KMVLLFHLIE…RVVDDLNPEV (175 aa)) constitute a Helicase C-terminal domain. Disordered stretches follow at residues 1117-1168 (SGKQ…PDSP) and 1194-1250 (NLGL…STMN). Polar residues-rich tracts occupy residues 1128–1148 (QATSGAQGSSAPYLSNGRHST) and 1218–1238 (DQSSHWPSNKRNPYSQLSYPN). Residues 1273–1277 (LPSLL) carry the LXXLL motif 2 motif. Positions 1340–1396 (GLPTNNPASTFPGYLSSHSNYQASPGTSSRPLPSGETELGSCEEDGRDDDVVEVTGE) are disordered. Polar residues predominate over residues 1355 to 1370 (SSHSNYQASPGTSSRP). The segment covering 1380-1396 (SCEEDGRDDDVVEVTGE) has biased composition (acidic residues).

This sequence belongs to the SNF2/RAD54 helicase family.

The protein resides in the nucleus. It carries out the reaction ATP + H2O = ADP + phosphate + H(+). In terms of biological role, DNA helicase that modulates androgen receptor (AR)-dependent transactivation in a promoter-dependent manner. In Xenopus tropicalis (Western clawed frog), this protein is Helicase ARIP4 (rad54l2).